We begin with the raw amino-acid sequence, 150 residues long: Ribonuclease H (150 aa).

One can recognise an RNase H type-1 domain in the interval 2-143 (PAPILDIFVD…ADELANRAIE (142 aa)). Asp-11, Glu-49, Asp-71, and Asp-135 together coordinate Mg(2+).

This sequence belongs to the RNase H family. In terms of assembly, monomer. It depends on Mg(2+) as a cofactor.

The protein resides in the cytoplasm. It catalyses the reaction Endonucleolytic cleavage to 5'-phosphomonoester.. Its function is as follows. Endonuclease that specifically degrades the RNA of RNA-DNA hybrids. The sequence is that of Ribonuclease H from Dichelobacter nodosus (strain VCS1703A).